Here is a 1367-residue protein sequence, read N- to C-terminus: Flocculation protein FLO11 (1367 aa).

Residues 1-21 (MQRPFLLAYLVLSLLFNSALG) form the signal peptide. The Flo11 domain maps to 31–207 (SSEGTSCNSI…NIDCDNNCGG (177 aa)). Cystine bridges form between Cys37–Cys201, Cys44–Cys179, and Cys141–Cys205. Residues 209–267 (KSSTTTSSTSESSTTTSSTSESSTTTSSTSESSTTTSSTSESSTSSSTTAPATPTTTSC) show a composition bias toward low complexity. 2 disordered regions span residues 209-975 (KSST…TTSV) and 1008-1032 (TTTV…PTTP). 45 consecutive repeat copies span residues 210–219 (SSTTTSSTSE), 220–229 (SSTTTSSTSE), 230–239 (SSTTTSSTSE), 240–249 (SSTTTSSTSE), 262–274 (PTTT…KPTP), 275–287 (PTTT…KPTP), 313–327 (PVPT…SSSA), 328–342 (PVPT…SSSA), 343–354 (PVTSSTTESSSA), 355–369 (PVPT…SSSA), 370–381 (PVTSSTTESSSA), 382–393 (PVTSSTTESSSA), 394–408 (PVPT…SSSA), 409–420 (PVTSSTTESSSA), 421–432 (PVTSSTTESSSA), 433–444 (PVTSSTTESSSA), 445–456 (PVTSSTTESSSA), 457–471 (PVPT…SSSA), 472–483 (PVTSSTTESSSA), 484–498 (PVPT…SSSA), 499–510 (PVTSSTTESSSA), 511–525 (PVPT…SSSA), 526–540 (PAPT…SSSA), 541–552 (PVTSSTTESSSA), 568–579 (PVTSSTTESSSA), 580–594 (PVPT…SSSA), 595–609 (PVPT…SSSA), 610–624 (PAPT…SSSA), 625–636 (PVTSSTTESSSA), 637–651 (PVPT…SSSA), 652–666 (PVPT…SSSA), 667–681 (PVPT…SSSA), 682–693 (PVTSSTTESSSA), 694–705 (PVTSSTTESSSA), 706–720 (PVPT…SSSA), 721–735 (PVPT…SSSA), 736–750 (PVPT…SSSA), 751–762 (PVTSSTTESSSA), 763–777 (PVPT…SSSA), 778–792 (PVPT…SSSA), 808–822 (PVPT…TSSA), 838–852 (PVPT…SSSA), 865–879 (PVPT…TSSA), 937–968 (TTIT…TTVP), and 981–1012 (TTIT…TTVP). Positions 210-249 (SSTTTSSTSESSTTTSSTSESSTTTSSTSESSTTTSSTSE) are 4 X 10 AA repeats, Ser/Thr-rich. The segment at 262–287 (PTTTSCTKEKPTPPTTTSCTKEKPTP) is 2 X 13 AA repeats, Thr-rich. Positions 281–292 (TKEKPTPPHHDT) are enriched in basic and acidic residues. Low complexity-rich tracts occupy residues 302–900 (TSKT…TVTP) and 910–948 (TETS…STGT). Positions 313–852 (PVPTPSSSTT…SSSTTESSSA (540 aa)) are 22 X 15 AA approximate repeats, Ser-rich. Residues 343–762 (PVTSSTTESS…TSSTTESSSA (420 aa)) form a 15 X 12 AA repeats, Ser/Thr-rich region. N-linked (GlcNAc...) asparagine glycosylation occurs at Asn817. Asn874 carries an N-linked (GlcNAc...) asparagine glycan. A 3 X 32 AA tandem repeats, Thr-rich region spans residues 937-1119 (TTITTTVCST…SPKTVTTTVP (183 aa)). Positions 949–961 (NSAGETTSGCSPK) are enriched in polar residues. Low complexity predominate over residues 962 to 975 (TVTTTVPTTTTTSV). Over residues 1014-1032 (STSPSETASESTTTSPTTP) the composition is skewed to low complexity. One copy of the 5-3 repeat lies at 1088 to 1119 (TTITTTVCSTGTNSAGETTSGCSPKTVTTTVP). A lipid anchor (GPI-anchor amidated glycine) is attached at Gly1346. Positions 1347–1367 (AANIKVLGNFMWLLLALPVVF) are cleaved as a propeptide — removed in mature form.

The protein belongs to the flocculin family. Highly divergent. In terms of processing, extensively O-mannosylated. The GPI-anchor is attached to the protein in the endoplasmic reticulum and serves to target the protein to the cell surface. There, the glucosamine-inositol phospholipid moiety is cleaved off and the GPI-modified mannoprotein is covalently attached via its lipidless GPI glycan remnant to the 1,6-beta-glucan of the outer cell wall layer. Post-translationally, a soluble form is probably produced by proteolytic cleavage at the cell surface (shedding).

The protein localises to the secreted. Its subcellular location is the cell wall. It localises to the membrane. Functionally, homophilic binding protein that enables kin discrimination in heterogeneous yeast populations by mediating homotypic cell-cell interactions during flocculation, a reversible and asexual process in which cells adhere to form aggregates (flocs). Plays a role in cell-substrate adhesion, haploid invasive growth, diploid pseudohyphae formation and biofilm (flor) development. Adhesive activity is inhibited by mannose, but not by glucose, maltose, sucrose or galactose. In Saccharomyces cerevisiae (strain ATCC 204508 / S288c) (Baker's yeast), this protein is Flocculation protein FLO11.